The sequence spans 172 residues: Large ribosomal subunit protein uL11m (172 aa).

It belongs to the universal ribosomal protein uL11 family.

It is found in the mitochondrion. The polypeptide is Large ribosomal subunit protein uL11m (mrpl11) (Dictyostelium discoideum (Social amoeba)).